The following is a 683-amino-acid chain: uncharacterized protein (683 aa).

The next 14 membrane-spanning stretches (helical) occupy residues 12 to 32 (LLLY…MMGL), 41 to 61 (LWLG…IGLI), 84 to 104 (MAIA…GILF), 110 to 130 (GLAY…LLAP), 162 to 182 (IAVL…IQGV), 194 to 214 (FAVG…LGGM), 221 to 241 (QVAQ…MIAW), 377 to 397 (LNFV…PHIL), 413 to 433 (VAWA…LAAL), 495 to 515 (IAGL…AAAL), 548 to 568 (VTTA…VTSL), 573 to 593 (ILFL…PVLV), 603 to 623 (AAGA…YIIV), and 645 to 665 (IASG…VSLL).

Belongs to the sodium:solute symporter (SSF) (TC 2.A.21) family.

The protein resides in the cell membrane. This is an uncharacterized protein from Cupriavidus necator (strain ATCC 17699 / DSM 428 / KCTC 22496 / NCIMB 10442 / H16 / Stanier 337) (Ralstonia eutropha).